The chain runs to 473 residues: Methionine aminopeptidase 2 (473 aa).

A disordered region spans residues Leu-23–Pro-121. Polar residues predominate over residues Lys-41–Asn-53. Positions Asp-73–Val-83 are enriched in acidic residues. Positions Ala-84 to Ala-93 are enriched in low complexity. Over residues Lys-97–Leu-113 the composition is skewed to basic residues. Residue His-224 participates in substrate binding. A divalent metal cation contacts are provided by Asp-244, Asp-255, and His-326. His-334 lines the substrate pocket. The a divalent metal cation site is built by Glu-359 and Glu-454.

This sequence belongs to the peptidase M24A family. Methionine aminopeptidase eukaryotic type 2 subfamily. Co(2+) is required as a cofactor. Requires Zn(2+) as cofactor. The cofactor is Mn(2+). It depends on Fe(2+) as a cofactor.

It is found in the cytoplasm. The catalysed reaction is Release of N-terminal amino acids, preferentially methionine, from peptides and arylamides.. Cotranslationally removes the N-terminal methionine from nascent proteins. The N-terminal methionine is often cleaved when the second residue in the primary sequence is small and uncharged (Met-Ala-, Cys, Gly, Pro, Ser, Thr, or Val). The protein is Methionine aminopeptidase 2 of Lodderomyces elongisporus (strain ATCC 11503 / CBS 2605 / JCM 1781 / NBRC 1676 / NRRL YB-4239) (Yeast).